The primary structure comprises 390 residues: GTPase Obg (390 aa).

The Obg domain occupies 1–159 (MKFVDEATIL…RDLQLELMLL (159 aa)). The segment at 127-146 (NTRFKSSVNRTPRQKTMGTP) is disordered. A compositionally biased stretch (polar residues) spans 129–143 (RFKSSVNRTPRQKTM). The 174-residue stretch at 160–333 (ADVGMLGMPN…LCWDVMHFII (174 aa)) folds into the OBG-type G domain. GTP is bound by residues 166-173 (GMPNAGKS), 191-195 (FTTLV), 213-216 (DIPG), 283-286 (NKID), and 314-316 (SAA). Ser-173 and Thr-193 together coordinate Mg(2+). A compositionally biased stretch (acidic residues) spans 364-384 (MEAEAEEEWDDDWDEDDDEGV). The tract at residues 364–390 (MEAEAEEEWDDDWDEDDDEGVEIVYQR) is disordered.

Belongs to the TRAFAC class OBG-HflX-like GTPase superfamily. OBG GTPase family. As to quaternary structure, monomer. Mg(2+) serves as cofactor.

It is found in the cytoplasm. Functionally, an essential GTPase which binds GTP, GDP and possibly (p)ppGpp with moderate affinity, with high nucleotide exchange rates and a fairly low GTP hydrolysis rate. Plays a role in control of the cell cycle, stress response, ribosome biogenesis and in those bacteria that undergo differentiation, in morphogenesis control. The chain is GTPase Obg from Cronobacter sakazakii (strain ATCC BAA-894) (Enterobacter sakazakii).